We begin with the raw amino-acid sequence, 342 residues long: Flagellar P-ring protein (342 aa).

Residues 1 to 19 form the signal peptide; the sequence is MKRVFLWLIFVLAFHKLLA.

It belongs to the FlgI family. The basal body constitutes a major portion of the flagellar organelle and consists of four rings (L,P,S, and M) mounted on a central rod.

It localises to the periplasm. Its subcellular location is the bacterial flagellum basal body. Functionally, assembles around the rod to form the L-ring and probably protects the motor/basal body from shearing forces during rotation. The sequence is that of Flagellar P-ring protein from Helicobacter pylori (strain P12).